Consider the following 457-residue polypeptide: UDP-glycosyltransferase 74C1 (457 aa).

Residues T281, 336-338, 353-361, and 375-378 contribute to the UDP-alpha-D-glucose site; these read VPQ, HCGWNSTLE, and WTDQ.

Belongs to the UDP-glycosyltransferase family.

This is UDP-glycosyltransferase 74C1 (UGT74C1) from Arabidopsis thaliana (Mouse-ear cress).